The chain runs to 358 residues: Phenylalanine--tRNA ligase alpha subunit (358 aa).

Glu-262 lines the Mg(2+) pocket.

The protein belongs to the class-II aminoacyl-tRNA synthetase family. Phe-tRNA synthetase alpha subunit type 1 subfamily. As to quaternary structure, tetramer of two alpha and two beta subunits. Mg(2+) is required as a cofactor.

It is found in the cytoplasm. The enzyme catalyses tRNA(Phe) + L-phenylalanine + ATP = L-phenylalanyl-tRNA(Phe) + AMP + diphosphate + H(+). This is Phenylalanine--tRNA ligase alpha subunit (pheS) from Streptomyces coelicolor (strain ATCC BAA-471 / A3(2) / M145).